Here is a 277-residue protein sequence, read N- to C-terminus: uncharacterized protein (277 aa).

7 consecutive transmembrane segments (helical) span residues 23–43 (CIGG…TAFI), 61–81 (FLIY…IIGG), 117–137 (LVLL…FGIF), 144–164 (IIGA…VISL), 197–217 (YIIL…IVVL), 221–241 (IIDI…IIYI), and 243–263 (IKGI…VFSI).

It to M.jannaschii MJ1189.

The protein localises to the cell membrane. This is an uncharacterized protein from Methanocaldococcus jannaschii (strain ATCC 43067 / DSM 2661 / JAL-1 / JCM 10045 / NBRC 100440) (Methanococcus jannaschii).